A 274-amino-acid polypeptide reads, in one-letter code: Chromatin modification-related protein YNG2 (274 aa).

The interval 121-194 (EDEMESGPDF…ASTEREGTLD (74 aa)) is disordered. The span at 166–180 (THREKSYNKGDDTAD) shows a compositional bias: basic and acidic residues. The PHD-type zinc-finger motif lies at 215 to 264 (NLYCFCQRVSFGEMVACDGPNCKYEWFHYECVNLTEPPKGTWYCPDCKQE). Zn(2+)-binding residues include Cys218, Cys220, Cys231, Cys236, His242, Cys245, Cys258, and Cys261.

It belongs to the ING family. Interacts with H3K4me3 and to a lesser extent with H3K4me2. Component of the NuA4 histone acetyltransferase complex.

It localises to the nucleus. Functionally, component of the NuA4 histone acetyltransferase complex which is involved in transcriptional activation of selected genes principally by acetylation of nucleosomal histone H4 and H2A. The NuA4 complex is also involved in DNA repair. Involved in cell cycle progression and meiosis. This is Chromatin modification-related protein YNG2 (YNG2) from Candida glabrata (strain ATCC 2001 / BCRC 20586 / JCM 3761 / NBRC 0622 / NRRL Y-65 / CBS 138) (Yeast).